The sequence spans 275 residues: Probable endonuclease 4 (275 aa).

Residues H66, H106, E140, D172, H175, H209, D222, H224, and E254 each coordinate Zn(2+).

This sequence belongs to the AP endonuclease 2 family. Zn(2+) serves as cofactor.

The catalysed reaction is Endonucleolytic cleavage to 5'-phosphooligonucleotide end-products.. In terms of biological role, endonuclease IV plays a role in DNA repair. It cleaves phosphodiester bonds at apurinic or apyrimidinic (AP) sites, generating a 3'-hydroxyl group and a 5'-terminal sugar phosphate. The sequence is that of Probable endonuclease 4 from Halobacterium salinarum (strain ATCC 29341 / DSM 671 / R1).